We begin with the raw amino-acid sequence, 396 residues long: Schizokinen exporter SchE (396 aa).

Residues 1 to 25 form the signal peptide; that stretch reads MLPKLILLATLYISQFIPTTFFIQA. Over 26 to 39 the chain is Cytoplasmic; that stretch reads LPVFMRQQKMSLDV. The helical transmembrane segment at 40–60 threads the bilayer; the sequence is IGFLGLLILPSGLKFLWSPFI. Over 61–73 the chain is Periplasmic; the sequence is DRYRLGKLGHYRG. The chain crosses the membrane as a helical span at residues 74–94; sequence WIICFQLLLISTMLVTAFIDI. Residues 95-104 lie on the Cytoplasmic side of the membrane; the sequence is QDNLNAFLTC. The chain crosses the membrane as a helical span at residues 105 to 127; the sequence is MFLASLFSSSQDIATDALAVNLL. At 128-137 the chain is on the periplasmic side; that stretch reads EPQERGLGNA. Residues 138–158 form a helical membrane-spanning segment; sequence IQSGGNIFGAIIGGGVMLILL. At 159–162 the chain is on the cytoplasmic side; it reads DKIG. Residues 163 to 183 form a helical membrane-spanning segment; sequence WRYSLITLSIFMLINLVPILI. Residues 184 to 214 are Periplasmic-facing; the sequence is YREKSQHQLENSTFFRSYFQPFISFLSRPKA. A helical transmembrane segment spans residues 215–235; that stretch reads LPWLFVVLLYMMGDSVTSLMI. Over 236-251 the chain is Cytoplasmic; the sequence is RPLLVDRGLSLPDIGW. The chain crosses the membrane as a helical span at residues 252–272; it reads ILGIVSYSARIVSALIAGLVI. Residues 273–281 are Periplasmic-facing; the sequence is VKLGRIKSL. A helical membrane pass occupies residues 282 to 302; the sequence is IIFGFIADLTTLLYIIPAIGV. Over 303–304 the chain is Cytoplasmic; it reads SS. A helical transmembrane segment spans residues 305–325; the sequence is LLVLYTVCIIVNATQSMAYTA. The Periplasmic segment spans residues 326–346; the sequence is LLSAMMDKCEKNTAATDYTMQ. Transmembrane regions (helical) follow at residues 347–367 and 368–388; these read VSVMFLGGIAATVLSGMLATT and MGYSFIFIMSAAVSLLSVFLI. Residues 389–396 lie on the Periplasmic side of the membrane; it reads TQEYGVSS.

This sequence belongs to the major facilitator superfamily.

The protein resides in the cell inner membrane. Its function is as follows. Involved in the TolC-like protein HgdD-dependent secretion of schizokinen, a dihydroxamate-type siderophore. Transports schizokinen from the cytoplasm to the periplasm. This is Schizokinen exporter SchE from Nostoc sp. (strain PCC 7120 / SAG 25.82 / UTEX 2576).